The primary structure comprises 93 residues: Defensin-like protein 209 (93 aa).

A signal peptide spans 1–19 (MKITILFLTLLVLSSSCTS). Intrachain disulfides connect cysteine 63–cysteine 80, cysteine 66–cysteine 85, and cysteine 70–cysteine 87.

It belongs to the DEFL family.

It is found in the secreted. The protein is Defensin-like protein 209 of Arabidopsis thaliana (Mouse-ear cress).